We begin with the raw amino-acid sequence, 316 residues long: 4-hydroxy-3-methylbut-2-enyl diphosphate reductase (316 aa).

Residue C12 participates in [4Fe-4S] cluster binding. (2E)-4-hydroxy-3-methylbut-2-enyl diphosphate is bound by residues H41 and H74. Positions 41 and 74 each coordinate dimethylallyl diphosphate. Positions 41 and 74 each coordinate isopentenyl diphosphate. C96 is a binding site for [4Fe-4S] cluster. H124 lines the (2E)-4-hydroxy-3-methylbut-2-enyl diphosphate pocket. Dimethylallyl diphosphate is bound at residue H124. Residue H124 coordinates isopentenyl diphosphate. The active-site Proton donor is the E126. Residue T167 participates in (2E)-4-hydroxy-3-methylbut-2-enyl diphosphate binding. Position 197 (C197) interacts with [4Fe-4S] cluster. Residues S225, S226, N227, and S269 each coordinate (2E)-4-hydroxy-3-methylbut-2-enyl diphosphate. 4 residues coordinate dimethylallyl diphosphate: S225, S226, N227, and S269. Isopentenyl diphosphate contacts are provided by S225, S226, N227, and S269.

Belongs to the IspH family. In terms of assembly, homodimer. Requires [4Fe-4S] cluster as cofactor.

It catalyses the reaction isopentenyl diphosphate + 2 oxidized [2Fe-2S]-[ferredoxin] + H2O = (2E)-4-hydroxy-3-methylbut-2-enyl diphosphate + 2 reduced [2Fe-2S]-[ferredoxin] + 2 H(+). It carries out the reaction dimethylallyl diphosphate + 2 oxidized [2Fe-2S]-[ferredoxin] + H2O = (2E)-4-hydroxy-3-methylbut-2-enyl diphosphate + 2 reduced [2Fe-2S]-[ferredoxin] + 2 H(+). It functions in the pathway isoprenoid biosynthesis; dimethylallyl diphosphate biosynthesis; dimethylallyl diphosphate from (2E)-4-hydroxy-3-methylbutenyl diphosphate: step 1/1. Its pathway is isoprenoid biosynthesis; isopentenyl diphosphate biosynthesis via DXP pathway; isopentenyl diphosphate from 1-deoxy-D-xylulose 5-phosphate: step 6/6. In terms of biological role, catalyzes the conversion of 1-hydroxy-2-methyl-2-(E)-butenyl 4-diphosphate (HMBPP) into a mixture of isopentenyl diphosphate (IPP) and dimethylallyl diphosphate (DMAPP). Acts in the terminal step of the DOXP/MEP pathway for isoprenoid precursor biosynthesis. This chain is 4-hydroxy-3-methylbut-2-enyl diphosphate reductase, found in Escherichia coli (strain UTI89 / UPEC).